The chain runs to 473 residues: 3-isopropylmalate dehydratase large subunit (473 aa).

Residues cysteine 351, cysteine 414, and cysteine 417 each contribute to the [4Fe-4S] cluster site.

This sequence belongs to the aconitase/IPM isomerase family. LeuC type 1 subfamily. As to quaternary structure, heterodimer of LeuC and LeuD. [4Fe-4S] cluster is required as a cofactor.

The catalysed reaction is (2R,3S)-3-isopropylmalate = (2S)-2-isopropylmalate. The protein operates within amino-acid biosynthesis; L-leucine biosynthesis; L-leucine from 3-methyl-2-oxobutanoate: step 2/4. Functionally, catalyzes the isomerization between 2-isopropylmalate and 3-isopropylmalate, via the formation of 2-isopropylmaleate. This chain is 3-isopropylmalate dehydratase large subunit, found in Polaromonas sp. (strain JS666 / ATCC BAA-500).